The chain runs to 95 residues: Small ribosomal subunit protein bS6 (95 aa).

Belongs to the bacterial ribosomal protein bS6 family.

In terms of biological role, binds together with bS18 to 16S ribosomal RNA. The sequence is that of Small ribosomal subunit protein bS6 from Nocardia farcinica (strain IFM 10152).